The primary structure comprises 229 residues: Flagellar L-ring protein (229 aa).

The signal sequence occupies residues 1 to 25 (MKQVRLPSSATVRAACAVAVAALAG). Residue cysteine 26 is the site of N-palmitoyl cysteine attachment. Cysteine 26 is lipidated: S-diacylglycerol cysteine.

It belongs to the FlgH family. As to quaternary structure, the basal body constitutes a major portion of the flagellar organelle and consists of four rings (L,P,S, and M) mounted on a central rod.

The protein resides in the cell outer membrane. It localises to the bacterial flagellum basal body. Assembles around the rod to form the L-ring and probably protects the motor/basal body from shearing forces during rotation. This is Flagellar L-ring protein from Burkholderia cenocepacia (strain ATCC BAA-245 / DSM 16553 / LMG 16656 / NCTC 13227 / J2315 / CF5610) (Burkholderia cepacia (strain J2315)).